The following is a 160-amino-acid chain: Serine-protein kinase RsbW (160 aa).

The protein belongs to the anti-sigma-factor family.

The enzyme catalyses L-seryl-[protein] + ATP = O-phospho-L-seryl-[protein] + ADP + H(+). The catalysed reaction is L-threonyl-[protein] + ATP = O-phospho-L-threonyl-[protein] + ADP + H(+). In terms of biological role, negative regulator of sigma-B activity. Phosphorylates and inactivates its specific antagonist protein, RsbV. Upon phosphorylation of RsbV, RsbW is released and binds to sigma-B, thereby blocking its ability to form an RNA polymerase holoenzyme (E-sigma-B). The sequence is that of Serine-protein kinase RsbW from Bacillus velezensis (strain DSM 23117 / BGSC 10A6 / LMG 26770 / FZB42) (Bacillus amyloliquefaciens subsp. plantarum).